Reading from the N-terminus, the 286-residue chain is Putative transcription factor kapC (286 aa).

The segment covering Met1 to His10 has biased composition (pro residues). Positions Met1 to Arg120 are disordered. Over residues His26–Gln40 the composition is skewed to low complexity. Pro residues predominate over residues Gln41–Met54. Positions Gln55–Ile67 are enriched in polar residues. Pro residues predominate over residues Pro81 to Gln92. Residues Pro102–Leu165 enclose the bZIP domain. The basic motif stretch occupies residues Leu103–Tyr126. A compositionally biased stretch (low complexity) spans Arg108–Ala118. Residues Leu130–Leu161 are leucine-zipper. The disordered stretch occupies residues Arg197–Ser286. A compositionally biased stretch (low complexity) spans Gly198–Gly222.

This sequence belongs to the bZIP family.

It localises to the nucleus. Functionally, putative transcription factor. This chain is Putative transcription factor kapC (kapC), found in Aspergillus terreus (strain NIH 2624 / FGSC A1156).